An 840-amino-acid chain; its full sequence is DNA gyrase subunit A (840 aa).

Residues leucine 51–leucine 516 form the Topo IIA-type catalytic domain. Residue tyrosine 139 is the O-(5'-phospho-DNA)-tyrosine intermediate of the active site. The short motif at glutamine 543–glycine 549 is the GyrA-box element.

The protein belongs to the type II topoisomerase GyrA/ParC subunit family. Heterotetramer, composed of two GyrA and two GyrB chains. In the heterotetramer, GyrA contains the active site tyrosine that forms a transient covalent intermediate with DNA, while GyrB binds cofactors and catalyzes ATP hydrolysis.

It is found in the cytoplasm. It carries out the reaction ATP-dependent breakage, passage and rejoining of double-stranded DNA.. Its function is as follows. A type II topoisomerase that negatively supercoils closed circular double-stranded (ds) DNA in an ATP-dependent manner to modulate DNA topology and maintain chromosomes in an underwound state. Negative supercoiling favors strand separation, and DNA replication, transcription, recombination and repair, all of which involve strand separation. Also able to catalyze the interconversion of other topological isomers of dsDNA rings, including catenanes and knotted rings. Type II topoisomerases break and join 2 DNA strands simultaneously in an ATP-dependent manner. The chain is DNA gyrase subunit A from Ureaplasma parvum serovar 3 (strain ATCC 700970).